The following is a 214-amino-acid chain: Adenylate kinase (214 aa).

10 to 15 (GAGKGT) contacts ATP. The tract at residues 30–59 (STGDMFRAAIKAGTELGKQAKALMDEGKLV) is NMP. Residues threonine 31, arginine 36, 57-59 (KLV), 85-88 (GFPR), and glutamine 92 each bind AMP. The LID stretch occupies residues 122 to 159 (GRRVHQTSGRSYHIVYNPPKVEGKDDVTGEDLIIRADD). ATP is bound by residues arginine 123 and 132–133 (SY). AMP is bound by residues arginine 156 and arginine 167. Glutamine 200 provides a ligand contact to ATP.

This sequence belongs to the adenylate kinase family. As to quaternary structure, monomer.

Its subcellular location is the cytoplasm. The catalysed reaction is AMP + ATP = 2 ADP. Its pathway is purine metabolism; AMP biosynthesis via salvage pathway; AMP from ADP: step 1/1. In terms of biological role, catalyzes the reversible transfer of the terminal phosphate group between ATP and AMP. Plays an important role in cellular energy homeostasis and in adenine nucleotide metabolism. In Haemophilus influenzae (strain PittEE), this protein is Adenylate kinase.